A 287-amino-acid chain; its full sequence is ATP synthase gamma chain (287 aa).

This sequence belongs to the ATPase gamma chain family. In terms of assembly, F-type ATPases have 2 components, CF(1) - the catalytic core - and CF(0) - the membrane proton channel. CF(1) has five subunits: alpha(3), beta(3), gamma(1), delta(1), epsilon(1). CF(0) has three main subunits: a, b and c.

The protein resides in the cell inner membrane. Functionally, produces ATP from ADP in the presence of a proton gradient across the membrane. The gamma chain is believed to be important in regulating ATPase activity and the flow of protons through the CF(0) complex. This chain is ATP synthase gamma chain, found in Salmonella paratyphi A (strain ATCC 9150 / SARB42).